A 432-amino-acid polypeptide reads, in one-letter code: Trigger factor (432 aa).

In terms of domain architecture, PPIase FKBP-type spans 161 to 246 (EDRVTIDFTG…LKKVEERELP (86 aa)).

Belongs to the FKBP-type PPIase family. Tig subfamily.

The protein localises to the cytoplasm. The enzyme catalyses [protein]-peptidylproline (omega=180) = [protein]-peptidylproline (omega=0). In terms of biological role, involved in protein export. Acts as a chaperone by maintaining the newly synthesized protein in an open conformation. Functions as a peptidyl-prolyl cis-trans isomerase. This is Trigger factor from Salmonella schwarzengrund (strain CVM19633).